The primary structure comprises 430 residues: Lipoyl synthase, chloroplastic (430 aa).

The span at 1–16 (MRSLATLHQSPASCSR) shows a compositional bias: polar residues. The N-terminal 40 residues, 1 to 40 (MRSLATLHQSPASCSRSAPVAPCPARRANSSRRVARQGPR), are a transit peptide targeting the chloroplast. Disordered stretches follow at residues 1–55 (MRSL…SEDV) and 85–119 (HLRSKSKSAAPVSPFAAPSPGSPSASSMLGPSLGA). Low complexity predominate over residues 91-119 (KSAAPVSPFAAPSPGSPSASSMLGPSLGA). Residues C155, C160, C166, C183, C187, C190, and S397 each contribute to the [4Fe-4S] cluster site. One can recognise a Radical SAM core domain in the interval 166-386 (CWNGELATAT…KFGQEEIGFR (221 aa)).

Belongs to the radical SAM superfamily. Lipoyl synthase family. [4Fe-4S] cluster serves as cofactor.

It is found in the plastid. The protein resides in the chloroplast. The catalysed reaction is [[Fe-S] cluster scaffold protein carrying a second [4Fe-4S](2+) cluster] + N(6)-octanoyl-L-lysyl-[protein] + 2 oxidized [2Fe-2S]-[ferredoxin] + 2 S-adenosyl-L-methionine + 4 H(+) = [[Fe-S] cluster scaffold protein] + N(6)-[(R)-dihydrolipoyl]-L-lysyl-[protein] + 4 Fe(3+) + 2 hydrogen sulfide + 2 5'-deoxyadenosine + 2 L-methionine + 2 reduced [2Fe-2S]-[ferredoxin]. The protein operates within protein modification; protein lipoylation via endogenous pathway; protein N(6)-(lipoyl)lysine from octanoyl-[acyl-carrier-protein]: step 2/2. Functionally, catalyzes the radical-mediated insertion of two sulfur atoms into the C-6 and C-8 positions of the octanoyl moiety bound to the lipoyl domains of lipoate-dependent enzymes, thereby converting the octanoylated domains into lipoylated derivatives. The polypeptide is Lipoyl synthase, chloroplastic (Chlamydomonas reinhardtii (Chlamydomonas smithii)).